The sequence spans 89 residues: Small ribosomal subunit protein uS15 (89 aa).

Belongs to the universal ribosomal protein uS15 family. Part of the 30S ribosomal subunit. Forms a bridge to the 50S subunit in the 70S ribosome, contacting the 23S rRNA.

In terms of biological role, one of the primary rRNA binding proteins, it binds directly to 16S rRNA where it helps nucleate assembly of the platform of the 30S subunit by binding and bridging several RNA helices of the 16S rRNA. Functionally, forms an intersubunit bridge (bridge B4) with the 23S rRNA of the 50S subunit in the ribosome. The polypeptide is Small ribosomal subunit protein uS15 (Chlamydia muridarum (strain MoPn / Nigg)).